A 252-amino-acid polypeptide reads, in one-letter code: Large ribosomal subunit protein uL4 (252 aa).

The protein belongs to the universal ribosomal protein uL4 family. As to quaternary structure, part of the 50S ribosomal subunit.

In terms of biological role, one of the primary rRNA binding proteins, this protein initially binds near the 5'-end of the 23S rRNA. It is important during the early stages of 50S assembly. It makes multiple contacts with different domains of the 23S rRNA in the assembled 50S subunit and ribosome. Its function is as follows. Forms part of the polypeptide exit tunnel. The protein is Large ribosomal subunit protein uL4 of Methanococcus maripaludis (strain DSM 14266 / JCM 13030 / NBRC 101832 / S2 / LL).